The following is a 508-amino-acid chain: MKLAYWMYAGPAHIGTLRIASSFKNVHAIMHAPIGDDYFNVMRSMLSRERDFTPVTTSVVDRNVLARGSQEKVVDNIVRKDAEEHPDLIVLTPTCTSSILQEDLHNFVERAQLEAKGDVMLADVNHYRYNELQAADRTLDQIVQYYIEKARKRGELAEGKTAKPSVNIIGTTTLGFHNNHDCTELKRLMADLGIKVNTLIPEGASVNDLKKMSQAWFNLVPYRELGLTTARYLEEQFGTPYIDITPMGVVETARCIRKIQQVINAQGAEVDYENFINEQTLHVSQAAWFSRSIDCQNLTGKKAVVFGDNTHAAAITKILAREMGIHVVWAGTYCKYDAGWFREQVSEYCDEVLISEDHGEIGDAIARVEPSAIFGTQMERHVGKRLDIPCGVIAAPIHVQNFPIGYKPFMGYEGTNQITDLIYNSFTLGMEDHLLEIFGGHDTKEVITRGISADSDLNWTKDGQAELNKIPGFVRGKVKRNTEKFARDRGFKEINAEVLYAAKEAVGA.

Residue D36 participates in [4Fe-4S] cluster binding. D294 acts as the Proton donor in catalysis. 429–430 (GM) contacts substrate.

The protein belongs to the ChlB/BchB/BchZ family. As to quaternary structure, protochlorophyllide reductase is composed of three subunits; ChlL, ChlN and ChlB. Forms a heterotetramer of two ChlB and two ChlN subunits. It depends on [4Fe-4S] cluster as a cofactor.

The enzyme catalyses chlorophyllide a + oxidized 2[4Fe-4S]-[ferredoxin] + 2 ADP + 2 phosphate = protochlorophyllide a + reduced 2[4Fe-4S]-[ferredoxin] + 2 ATP + 2 H2O. It functions in the pathway porphyrin-containing compound metabolism; chlorophyll biosynthesis (light-independent). Its function is as follows. Component of the dark-operative protochlorophyllide reductase (DPOR) that uses Mg-ATP and reduced ferredoxin to reduce ring D of protochlorophyllide (Pchlide) to form chlorophyllide a (Chlide). This reaction is light-independent. The NB-protein (ChlN-ChlB) is the catalytic component of the complex. In Nostoc punctiforme (strain ATCC 29133 / PCC 73102), this protein is Light-independent protochlorophyllide reductase subunit B.